A 172-amino-acid polypeptide reads, in one-letter code: Spore coat protein X (172 aa).

The protein localises to the spore coat. The sequence is that of Spore coat protein X (cotX) from Bacillus subtilis (strain 168).